The sequence spans 261 residues: Glutamate 5-kinase (261 aa).

Lysine 7 provides a ligand contact to ATP. Substrate-binding residues include serine 46, aspartate 131, and asparagine 147. Residues 167–168 and 209–215 each bind ATP; these read SD and TGGIVTK.

This sequence belongs to the glutamate 5-kinase family.

The protein resides in the cytoplasm. The enzyme catalyses L-glutamate + ATP = L-glutamyl 5-phosphate + ADP. It participates in amino-acid biosynthesis; L-proline biosynthesis; L-glutamate 5-semialdehyde from L-glutamate: step 1/2. In terms of biological role, catalyzes the transfer of a phosphate group to glutamate to form L-glutamate 5-phosphate. The polypeptide is Glutamate 5-kinase (Wolinella succinogenes (strain ATCC 29543 / DSM 1740 / CCUG 13145 / JCM 31913 / LMG 7466 / NCTC 11488 / FDC 602W) (Vibrio succinogenes)).